Reading from the N-terminus, the 402-residue chain is Tryptophan synthase beta chain (402 aa).

Residue Lys92 is modified to N6-(pyridoxal phosphate)lysine.

The protein belongs to the TrpB family. Tetramer of two alpha and two beta chains. It depends on pyridoxal 5'-phosphate as a cofactor.

The enzyme catalyses (1S,2R)-1-C-(indol-3-yl)glycerol 3-phosphate + L-serine = D-glyceraldehyde 3-phosphate + L-tryptophan + H2O. It participates in amino-acid biosynthesis; L-tryptophan biosynthesis; L-tryptophan from chorismate: step 5/5. Its function is as follows. The beta subunit is responsible for the synthesis of L-tryptophan from indole and L-serine. The polypeptide is Tryptophan synthase beta chain (Staphylococcus epidermidis (strain ATCC 35984 / DSM 28319 / BCRC 17069 / CCUG 31568 / BM 3577 / RP62A)).